We begin with the raw amino-acid sequence, 131 residues long: Holo-[acyl-carrier-protein] synthase (131 aa).

Residues D8 and E57 each contribute to the Mg(2+) site.

Belongs to the P-Pant transferase superfamily. AcpS family. The cofactor is Mg(2+).

The protein resides in the cytoplasm. The enzyme catalyses apo-[ACP] + CoA = holo-[ACP] + adenosine 3',5'-bisphosphate + H(+). Functionally, transfers the 4'-phosphopantetheine moiety from coenzyme A to a Ser of acyl-carrier-protein. The polypeptide is Holo-[acyl-carrier-protein] synthase (Thiobacillus denitrificans (strain ATCC 25259 / T1)).